The following is a 616-amino-acid chain: UvrABC system protein C (616 aa).

One can recognise a GIY-YIG domain in the interval 21-100; sequence TCPGVYQFKN…IKDLKPRYNI (80 aa). The UVR domain maps to 214-249; it reads GALIRTLSAEMHRYADELRFEEAAELKIQIEGLRKY.

This sequence belongs to the UvrC family. In terms of assembly, interacts with UvrB in an incision complex.

The protein resides in the cytoplasm. Its function is as follows. The UvrABC repair system catalyzes the recognition and processing of DNA lesions. UvrC both incises the 5' and 3' sides of the lesion. The N-terminal half is responsible for the 3' incision and the C-terminal half is responsible for the 5' incision. This Prosthecochloris aestuarii (strain DSM 271 / SK 413) protein is UvrABC system protein C.